The sequence spans 366 residues: Cyclin-O protein A (366 aa).

Disordered regions lie at residues 18-55 and 80-99; these read AAFS…GIKK and YETP…PYDS.

Belongs to the cyclin family.

The protein resides in the cytoplasm. In terms of biological role, specifically required for generation of multiciliated cells, possibly by promoting a cell cycle state compatible with centriole amplification and maturation. Acts downstream of mcidas to promote mother centriole amplification and maturation in preparation for apical docking. This is Cyclin-O protein A (ccno-a) from Xenopus laevis (African clawed frog).